A 293-amino-acid polypeptide reads, in one-letter code: Carbapenem-hydrolyzing beta-lactamase KPC (293 aa).

A signal peptide spans 1–24 (MSLYRRLVLLSCLSWPLAGFSATA). Residue S69 is the Acyl-ester intermediate of the active site. E167 (proton acceptor) is an active-site residue. 233–235 (KTG) contributes to the substrate binding site.

The protein belongs to the class-A beta-lactamase family.

The enzyme catalyses a beta-lactam + H2O = a substituted beta-amino acid. Not inhibited by EDTA, inhibited by clavulanic acid and tazobactam. Hydrolyzes carbapenems, penicillins, cephalosporins and aztreonam with varying efficiency. This Klebsiella oxytoca protein is Carbapenem-hydrolyzing beta-lactamase KPC (bla).